A 35-amino-acid chain; its full sequence is Beta/delta-theraphotoxin-Pre1a (35 aa).

Cystine bridges form between Cys-3–Cys-18, Cys-10–Cys-23, and Cys-17–Cys-30.

It belongs to the neurotoxin 10 (Hwtx-1) family. In terms of tissue distribution, expressed by the venom gland.

It is found in the secreted. Gating-modifier toxin that both inhibits the peak current of human Nav1.1/SCN1A, rat Nav1.2/SCN2A, human Nav1.6/SCN8A, and human Nav1.7/SCN9A and concurrently inhibits fast inactivation of human Nav1.1 and rat Nav1.3/SCN3A. The relative rank order potency for Nav modulation is Nav1.3 (inactivation EC(50)=45 nM) &gt; Nav1.7 &gt; Nav1.2 &gt; Nav1.1 (inactivation) &gt; Nav1.1 &gt; Nav1.6 &gt; Nav1.3 (IC(50)=8 uM). The DII and DIV S3-S4 loops of Nav channel voltage sensors are important for the interaction of this toxin with Nav channels but cannot account for its unique subtype selectivity. It is the variability of the S1-S2 loops between NaV channels which contributes substantially to the selectivity profile observed for this toxin, particularly with regards to fast inactivation. This toxin may bind the channel in the resting state. The polypeptide is Beta/delta-theraphotoxin-Pre1a (Psalmopoeus reduncus (Costa Rican orangemouth tarantula)).